The chain runs to 112 residues: Histone H3-4 (112 aa).

The disordered stretch occupies residues 1–31; sequence QTGAKAPRKALANKAARKTAPADGGVKKPHR.

It belongs to the histone H3 family. The nucleosome is a histone octamer containing two molecules each of H2A, H2B, H3 and H4 assembled in one H3-H4 heterotetramer and two H2A-H2B heterodimers. The octamer wraps approximately 147 bp of DNA.

It is found in the nucleus. Its subcellular location is the chromosome. Its function is as follows. Core component of nucleosome. Nucleosomes wrap and compact DNA into chromatin, limiting DNA accessibility to the cellular machineries which require DNA as a template. Histones thereby play a central role in transcription regulation, DNA repair, DNA replication and chromosomal stability. DNA accessibility is regulated via a complex set of post-translational modifications of histones, also called histone code, and nucleosome remodeling. The polypeptide is Histone H3-4 (H3-4) (Stylonychia lemnae (Ciliate)).